Consider the following 268-residue polypeptide: DNA ligase (268 aa).

The active-site N6-AMP-lysine intermediate is lysine 41. Residues phenylalanine 111, arginine 181, and lysine 187 each contribute to the ATP site.

It belongs to the ATP-dependent DNA ligase family. A divalent metal cation serves as cofactor.

It catalyses the reaction ATP + (deoxyribonucleotide)n-3'-hydroxyl + 5'-phospho-(deoxyribonucleotide)m = (deoxyribonucleotide)n+m + AMP + diphosphate.. Functionally, catalyzes efficient strand joining on a single nicked DNA. This chain is DNA ligase (ligA), found in Haemophilus influenzae (strain ATCC 51907 / DSM 11121 / KW20 / Rd).